The primary structure comprises 207 residues: Large ribosomal subunit protein bL25 (207 aa).

Residues glutamine 182 to aspartate 207 form a disordered region.

This sequence belongs to the bacterial ribosomal protein bL25 family. CTC subfamily. As to quaternary structure, part of the 50S ribosomal subunit; part of the 5S rRNA/L5/L18/L25 subcomplex. Contacts the 5S rRNA. Binds to the 5S rRNA independently of L5 and L18.

In terms of biological role, this is one of the proteins that binds to the 5S RNA in the ribosome where it forms part of the central protuberance. The protein is Large ribosomal subunit protein bL25 of Micrococcus luteus (strain ATCC 4698 / DSM 20030 / JCM 1464 / CCM 169 / CCUG 5858 / IAM 1056 / NBRC 3333 / NCIMB 9278 / NCTC 2665 / VKM Ac-2230) (Micrococcus lysodeikticus).